We begin with the raw amino-acid sequence, 485 residues long: Expansin-like protein 8 (485 aa).

The N-terminal stretch at Met1–Ala21 is a signal peptide. Topologically, residues Asp22–Thr464 are extracellular. Residues Leu26–Asn139 enclose the Expansin-like EG45 domain. Intrachain disulfides connect Cys29–Cys70 and Cys73–Cys134. N-linked (GlcNAc...) asparagine glycosylation is found at Asn117 and Asn365. Residues Glu408–Gly436 are disordered. Residues Ser414–Gly431 are compositionally biased toward low complexity. Asn454 carries an N-linked (GlcNAc...) asparagine glycan. Residues Asn465–Phe485 traverse the membrane as a helical segment.

The protein belongs to the expansin family. Expansin A subfamily.

The protein resides in the membrane. In terms of biological role, may serve to lubricate the movement of the cellulose microfibrils during cell growth and wall extension and/or may serve to maintain the fluid state of the slug cell wall. The protein is Expansin-like protein 8 (expl8) of Dictyostelium discoideum (Social amoeba).